We begin with the raw amino-acid sequence, 233 residues long: Transcriptional regulatory protein NatR (233 aa).

The Response regulatory domain occupies 3-117; that stretch reads KVGLVDDYRV…RLAASFDRYL (115 aa). Asp-54 carries the 4-aspartylphosphate modification. The 105-residue stretch at 129–233 folds into the HTH LytTR-type domain; it reads ILIKQKSEMH…QLDYFQNYYF (105 aa).

Phosphorylated by NatK.

Its subcellular location is the cytoplasm. Member of the two-component regulatory system NatK/NatR that positively regulates the expression of the natAB operon. Acts by binding directly to the promoter of natAB. In Bacillus subtilis (strain 168), this protein is Transcriptional regulatory protein NatR.